We begin with the raw amino-acid sequence, 2554 residues long: DnaJ homolog subfamily C GRV2 (2554 aa).

2 disordered regions span residues 746–766 and 810–833; these read DVVD…KRLL and QRRA…GVDS. Positions 815-825 are enriched in polar residues; the sequence is DSSSEASNPQA. Coiled coils occupy residues 925 to 951 and 1518 to 1546; these read TRQE…EDIS and RTAS…LKRQ. The J domain occupies 1524 to 1606; it reads LNEEISNISK…AQCILYRRYG (83 aa). Disordered stretches follow at residues 1960-1994 and 2339-2366; these read IEDR…SSEG and SGEV…GQTP. Positions 1966-1977 are enriched in polar residues; the sequence is SNDTPELQSSVA. Residues 1982 to 1994 show a composition bias toward basic and acidic residues; sequence IEEHSDHQPSSEG. Residues 2352–2366 show a composition bias toward polar residues; that stretch reads VNESTDPSSLPGQTP.

Constitutively expressed in roots, hypocotyls, leaves (e.g. vascular tissues), stems, flowers (e.g. petals and stigmas), siliques and pollen.

It is found in the endosome membrane. In terms of biological role, required for endosome formation, vacuolar protein sorting and determination of the embryo growth axis. Necessary for the transport of proteins into protein storage vacuoles (PSVs). Participates in vesicle trafficking from the endosome to the central vacuole. Involved in the regulation of shoot phototropism and gravitropism, probably through the positioning of specialized amyloplasts (statoliths) in endodermal cells. In Arabidopsis thaliana (Mouse-ear cress), this protein is DnaJ homolog subfamily C GRV2 (GRV2).